The primary structure comprises 208 residues: Protein TIC 20-II, chloroplastic (208 aa).

The transit peptide at 1-49 (MASLCLSLHQTLTNPLSAPRCRPLSLSFPGSSTFSIRPSSRRATALTTR) directs the protein to the chloroplast. A run of 4 helical transmembrane segments spans residues 61–83 (VISIASYALPFFNSLQYGRFLFA), 101–121 (LYRSVPYASFVAFFGLYLGVV), 134–154 (AMQAVTLDVLLAVPVLLTRIL), and 172–192 (TGVFVFSFMCFVYGVVSSLLG).

This sequence belongs to the Tic20 family. As to quaternary structure, part of the Tic complex. As to expression, expressed in leaves, siliques and roots.

It is found in the plastid. It localises to the chloroplast inner membrane. Its function is as follows. May be involved in protein precursor import into chloroplasts. Not redundant with TIC20-I, TIC20-IV or TIC20-V. This Arabidopsis thaliana (Mouse-ear cress) protein is Protein TIC 20-II, chloroplastic (TIC20-II).